We begin with the raw amino-acid sequence, 366 residues long: Ribosomal RNA large subunit methyltransferase M (366 aa).

S-adenosyl-L-methionine contacts are provided by residues Ser-188, 221 to 224 (CPGG), Asp-240, Asp-260, and Asp-277. The active-site Proton acceptor is the Lys-306.

The protein belongs to the class I-like SAM-binding methyltransferase superfamily. RNA methyltransferase RlmE family. RlmM subfamily. Monomer.

The protein resides in the cytoplasm. The enzyme catalyses cytidine(2498) in 23S rRNA + S-adenosyl-L-methionine = 2'-O-methylcytidine(2498) in 23S rRNA + S-adenosyl-L-homocysteine + H(+). Catalyzes the 2'-O-methylation at nucleotide C2498 in 23S rRNA. The polypeptide is Ribosomal RNA large subunit methyltransferase M (Klebsiella pneumoniae (strain 342)).